The primary structure comprises 271 residues: TIP41-like protein (271 aa).

Lysine 106 is subject to N6-acetyllysine. Residues 173–271 form an interaction with PPP2CA region; that stretch reads RVMPSSFFLL…PVDSQSTPSE (99 aa). Phosphoserine occurs at positions 265 and 270.

It belongs to the TIP41 family. In terms of assembly, interacts with PPP2CA. Interacts with PPP2CB, PPP4C and PPP6C. Interacts with IGBP1; the interaction is dependent on PPP2CA. Associates with a protein phosphatase 2A PP2A(C):IGBP1 complex. Interacts with PPP4C and PPP4R2.

The protein localises to the cytoplasm. May be a allosteric regulator of serine/threonine-protein phosphatase 2A (PP2A). Inhibits catalytic activity of the PP2A(D) core complex in vitro. The PP2A(C):TIPRL complex does not show phosphatase activity. Acts as a negative regulator of serine/threonine-protein phosphatase 4 probably by inhibiting the formation of the active PPP4C:PPP4R2 complex; the function is proposed to implicate it in DNA damage response by promoting H2AX phosphorylated on Ser-140 (gamma-H2AX). May play a role in the regulation of ATM/ATR signaling pathway controlling DNA replication and repair. In Mus musculus (Mouse), this protein is TIP41-like protein (Tiprl).